The primary structure comprises 651 residues: L-aspartate oxidase, chloroplastic (651 aa).

Residues 1-74 constitute a chloroplast transit peptide; it reads MAAHVSTGNI…PISETSKPIR (74 aa). Residues 92–95, lysine 114, 121–128, and aspartate 292 contribute to the FAD site; these read SGVA and NTNYAQGG. The active-site Proton donor/acceptor is the arginine 368. Residues glutamate 453 and 469-470 each bind FAD; that span reads SL.

The protein belongs to the FAD-dependent oxidoreductase 2 family. NadB subfamily. In terms of assembly, interacts in vitro with QS. Requires FAD as cofactor.

The protein localises to the plastid. The protein resides in the chloroplast. It carries out the reaction L-aspartate + O2 = iminosuccinate + H2O2. It functions in the pathway cofactor biosynthesis; NAD(+) biosynthesis; iminoaspartate from L-aspartate (oxidase route): step 1/1. Its function is as follows. Catalyzes the oxidation of L-aspartate to iminoaspartate. Can complement nadB-deficient E.coli mutant. Plays a role in stomatal immunity. In Arabidopsis thaliana (Mouse-ear cress), this protein is L-aspartate oxidase, chloroplastic.